Consider the following 65-residue polypeptide: uncharacterized protein (65 aa).

It localises to the plastid. The protein localises to the chloroplast. This is an uncharacterized protein from Porphyra purpurea (Red seaweed).